A 173-amino-acid polypeptide reads, in one-letter code: Placenta-specific protein 1 (173 aa).

A signal peptide spans 1–23; it reads MNLRKFLGGTVLVAFMLFSYSEQ.

The protein belongs to the PLAC1 family. As to expression, expressed in placenta.

Its subcellular location is the secreted. In terms of biological role, may play a role in placental development. The protein is Placenta-specific protein 1 of Mus musculus (Mouse).